The primary structure comprises 206 residues: Reticulon-like protein B13 (206 aa).

Residues 16–206 form the Reticulon domain; that stretch reads VEDIYLWRRK…GTEEKVKKSE (191 aa). Transmembrane regions (helical) follow at residues 27–47, 50–70, and 134–154; these read LAFS…FYGF, ITIV…WGSL, and IGNL…GLTV.

The protein localises to the endoplasmic reticulum membrane. The protein is Reticulon-like protein B13 (RTNLB13) of Arabidopsis thaliana (Mouse-ear cress).